Consider the following 336-residue polypeptide: Ribosomal RNA large subunit methyltransferase F (336 aa).

A compositionally biased stretch (basic residues) spans 212–231; sequence HHLERSRGKPTGKGVRRVRS. The interval 212-234 is disordered; the sequence is HHLERSRGKPTGKGVRRVRSGRM.

It belongs to the methyltransferase superfamily. METTL16/RlmF family.

The protein localises to the cytoplasm. It catalyses the reaction adenosine(1618) in 23S rRNA + S-adenosyl-L-methionine = N(6)-methyladenosine(1618) in 23S rRNA + S-adenosyl-L-homocysteine + H(+). Its function is as follows. Specifically methylates the adenine in position 1618 of 23S rRNA. The chain is Ribosomal RNA large subunit methyltransferase F from Methylobacillus flagellatus (strain ATCC 51484 / DSM 6875 / VKM B-1610 / KT).